Reading from the N-terminus, the 598-residue chain is MTKRRNLFMVGSSFTIDHLPPEIWLCISKLVGTSDLHNLCLINRRLYLTITSDEIWKRRCYDRWINRESLDILTGNDYDSIPVSQWYSYYLRRAKWENKIFCLLWGLTEETNPQHFREKYLHILQFRHYKLATFLHRIIKQGYIPDKRPLDLITYANYLLKNVRHKYVFPLFYPTNAAELKNLNNMASRDAEMIYLRLSAIDTSFDDLLDAREFILNGICSDLLQKYKKIEEFLKLRPVTRVSKLISISTDYLDCFTQPHDSVGQTNDRATGRELHREDFMLLRVYSREGRGYKTIILAIIQAITKRYNVDSYLARDHLVVSEPDFPDGRAFVTVNEDFQPYIFDKEDLLSVWSNNFHNAENFESTVLPALLEPISIQHLLTEFFRELLRCKPRPFEGYPNRAHGLRDMFPYGKVEVPRDVTMYFAFIYDLFDGMFESGMTSLRGQMLRDLLNYVNANNFGDLNIIIGQNALKEPNDCWSNKRDYVLLDDNNKIGYFYTDIETEDTLCALNQYEVDGKVFITTIDILGDIRVRLAEGLTPFQGDNDKLWESFSSVVPRTDWGLFFKGYDKERRRMQLNPYIEEKLSNLANDEQPLHNL.

The 47-residue stretch at 13 to 59 folds into the F-box domain; the sequence is SFTIDHLPPEIWLCISKLVGTSDLHNLCLINRRLYLTITSDEIWKRR.

In terms of assembly, interacts with SKP1. Component of the probable SCF(MDM30) complex containing CDC53, SKP1, RBX1 and MDM30. Interacts with SKP1 and FZO1.

The protein localises to the cytoplasm. It localises to the mitochondrion. Its pathway is protein modification; protein ubiquitination. Its function is as follows. Substrate recognition component of a SCF (SKP1-CUL1-F-box protein) E3 ubiquitin-protein ligase complex which mediates the ubiquitination and subsequent proteasomal degradation of target proteins. Probably recognizes and binds to phosphorylated target proteins. Recognizes FZO1 and regulates the amount of FZO1. Regulatory factor for the mitochondrial fusion machinery. Required for mitochondrial DNA maintenance. The sequence is that of Mitochondrial distribution and morphology protein 30 (MDM30) from Saccharomyces cerevisiae (strain ATCC 204508 / S288c) (Baker's yeast).